A 424-amino-acid chain; its full sequence is Kynureninase (424 aa).

Pyridoxal 5'-phosphate is bound by residues Leu-105, Ser-106, 133 to 136, Asp-218, His-221, and Tyr-243; that span reads FPTD. Lys-244 is modified (N6-(pyridoxal phosphate)lysine). Residues Trp-274 and Asn-302 each contribute to the pyridoxal 5'-phosphate site.

The protein belongs to the kynureninase family. In terms of assembly, homodimer. Pyridoxal 5'-phosphate serves as cofactor.

It carries out the reaction L-kynurenine + H2O = anthranilate + L-alanine + H(+). It catalyses the reaction 3-hydroxy-L-kynurenine + H2O = 3-hydroxyanthranilate + L-alanine + H(+). Its pathway is amino-acid degradation; L-kynurenine degradation; L-alanine and anthranilate from L-kynurenine: step 1/1. It participates in cofactor biosynthesis; NAD(+) biosynthesis; quinolinate from L-kynurenine: step 2/3. Functionally, catalyzes the cleavage of L-kynurenine (L-Kyn) and L-3-hydroxykynurenine (L-3OHKyn) into anthranilic acid (AA) and 3-hydroxyanthranilic acid (3-OHAA), respectively. The sequence is that of Kynureninase from Stenotrophomonas maltophilia (strain K279a).